The following is a 380-amino-acid chain: All-trans-retinol dehydrogenase [NAD(+)] ADH4 (380 aa).

Cysteine 47 contributes to the Zn(2+) binding site. Residue histidine 48–threonine 49 coordinates NAD(+). 5 residues coordinate Zn(2+): histidine 69, cysteine 99, cysteine 102, cysteine 105, and cysteine 113. Position 121 is a phosphoserine (serine 121). Cysteine 180 is a Zn(2+) binding site. Residues glycine 205–glycine 210, aspartate 229, and lysine 234 contribute to the NAD(+) site. Serine 278 carries the phosphoserine modification. NAD(+) is bound by residues isoleucine 298–valine 300, threonine 323–phenylalanine 325, and arginine 375.

Belongs to the zinc-containing alcohol dehydrogenase family. Class-II subfamily. As to quaternary structure, homodimer. It depends on Zn(2+) as a cofactor.

The protein resides in the cytoplasm. The catalysed reaction is all-trans-retinol + NAD(+) = all-trans-retinal + NADH + H(+). The enzyme catalyses 9-cis-retinol + NAD(+) = 9-cis-retinal + NADH + H(+). It carries out the reaction 20-oxo-(5Z,8Z,11Z,14Z)-eicosatetraenoate + NAD(+) + H2O = (5Z,8Z,11Z,14Z)-eicosatetraenedioate + NADH + 2 H(+). It catalyses the reaction 20-hydroxy-(5Z,8Z,11Z,14Z)-eicosatetraenoate + NAD(+) = 20-oxo-(5Z,8Z,11Z,14Z)-eicosatetraenoate + NADH + H(+). The catalysed reaction is 1,4-benzoquinone + NADH + H(+) = hydroquinone + NAD(+). Its activity is regulated as follows. Oxydation of 20-HETE is inhibited by low concentrations of N-heptylformamide. Oxydation of 20-HETE is a decreased by 55-65% by either all-trans-retinol or all-trans-retinoic acid. Strongly inhibited by omega-hydroxy fatty acids. In terms of biological role, catalyzes the NAD-dependent oxidation of either all-trans-retinol or 9-cis-retinol. Also oxidizes long chain omega-hydroxy fatty acids, such as 20-HETE, producing both the intermediate aldehyde, 20-oxoarachidonate and the end product, a dicarboxylic acid, (5Z,8Z,11Z,14Z)-eicosatetraenedioate. Also catalyzes the reduction of benzoquinones. The polypeptide is All-trans-retinol dehydrogenase [NAD(+)] ADH4 (Homo sapiens (Human)).